The following is a 162-amino-acid chain: Blue copper protein 1b (162 aa).

The N-terminal stretch at 1 to 23 (MASSRVVLILSISMVLLSSVAIA) is a signal peptide. In terms of domain architecture, Phytocyanin spans 25–125 (TDYIVGDDKG…QMKLVITVLA (101 aa)). A Cu cation-binding site is contributed by His-65. Asn-71 carries N-linked (GlcNAc...) asparagine glycosylation. An intrachain disulfide couples Cys-78 to Cys-112. Cu cation-binding residues include Cys-106, His-111, and Met-117. Residues 142-162 (VVSSLFGVVMAIMVAIAVIFA) traverse the membrane as a helical segment.

The protein localises to the membrane. The chain is Blue copper protein 1b from Medicago truncatula (Barrel medic).